Here is a 36-residue protein sequence, read N- to C-terminus: Collagen alpha-2(I) chain (36 aa).

The disordered stretch occupies residues 1–36 (GSNGEPGSAGPPGPAGLRGLPGESGAVGPAGPPGSR). 4-hydroxyproline is present on residues P6 and P12. Residues 15–29 (AGLRGLPGESGAVGP) show a composition bias toward low complexity. P33 is modified (4-hydroxyproline).

The protein belongs to the fibrillar collagen family. As to quaternary structure, trimers of one alpha 2(I) and two alpha 1(I) chains. In terms of processing, proline residues at the third position of the tripeptide repeating unit (G-X-Y) are hydroxylated in some or all of the chains.

The protein resides in the secreted. It localises to the extracellular space. Its subcellular location is the extracellular matrix. Type I collagen is a member of group I collagen (fibrillar forming collagen). In Brachylophosaurus canadensis (Campanian hadrosaur), this protein is Collagen alpha-2(I) chain.